A 319-amino-acid polypeptide reads, in one-letter code: Ornithine carbamoyltransferase (319 aa).

Carbamoyl phosphate contacts are provided by residues 55–58, Gln82, Arg106, and 133–136; these read STRT and HPCQ. L-ornithine-binding positions include Asn171, Asp234, and 238 to 239; that span reads SM. Residues 274–275 and Arg302 contribute to the carbamoyl phosphate site; that span reads CL.

This sequence belongs to the aspartate/ornithine carbamoyltransferase superfamily. OTCase family.

It localises to the cytoplasm. The catalysed reaction is carbamoyl phosphate + L-ornithine = L-citrulline + phosphate + H(+). It functions in the pathway amino-acid biosynthesis; L-arginine biosynthesis; L-arginine from L-ornithine and carbamoyl phosphate: step 1/3. Reversibly catalyzes the transfer of the carbamoyl group from carbamoyl phosphate (CP) to the N(epsilon) atom of ornithine (ORN) to produce L-citrulline. The protein is Ornithine carbamoyltransferase of Corynebacterium diphtheriae (strain ATCC 700971 / NCTC 13129 / Biotype gravis).